Reading from the N-terminus, the 1076-residue chain is DNA-directed RNA polymerase subunit beta (1076 aa).

The protein belongs to the RNA polymerase beta chain family. In plastids the minimal PEP RNA polymerase catalytic core is composed of four subunits: alpha, beta, beta', and beta''. When a (nuclear-encoded) sigma factor is associated with the core the holoenzyme is formed, which can initiate transcription.

It localises to the plastid. The protein localises to the chloroplast. The enzyme catalyses RNA(n) + a ribonucleoside 5'-triphosphate = RNA(n+1) + diphosphate. Functionally, DNA-dependent RNA polymerase catalyzes the transcription of DNA into RNA using the four ribonucleoside triphosphates as substrates. In Triticum aestivum (Wheat), this protein is DNA-directed RNA polymerase subunit beta.